Reading from the N-terminus, the 274-residue chain is Glucosamine-6-phosphate deaminase (274 aa).

Residue D71 is the Proton acceptor; for enolization step of the active site. Catalysis depends on D140, which acts as the For ring-opening step. H142 (proton acceptor; for ring-opening step) is an active-site residue. E147 functions as the For ring-opening step in the catalytic mechanism.

This sequence belongs to the glucosamine/galactosamine-6-phosphate isomerase family. NagB subfamily.

It catalyses the reaction alpha-D-glucosamine 6-phosphate + H2O = beta-D-fructose 6-phosphate + NH4(+). It functions in the pathway amino-sugar metabolism; N-acetylneuraminate degradation; D-fructose 6-phosphate from N-acetylneuraminate: step 5/5. In terms of biological role, catalyzes the reversible isomerization-deamination of glucosamine 6-phosphate (GlcN6P) to form fructose 6-phosphate (Fru6P) and ammonium ion. The sequence is that of Glucosamine-6-phosphate deaminase from Fusobacterium nucleatum subsp. nucleatum (strain ATCC 25586 / DSM 15643 / BCRC 10681 / CIP 101130 / JCM 8532 / KCTC 2640 / LMG 13131 / VPI 4355).